Here is a 142-residue protein sequence, read N- to C-terminus: Transcriptional regulator MraZ (142 aa).

2 SpoVT-AbrB domains span residues 5–51 and 77–120; these read ASAL…PRPE and AMDV…DSQT.

The protein belongs to the MraZ family. As to quaternary structure, forms oligomers.

It is found in the cytoplasm. The protein localises to the nucleoid. The protein is Transcriptional regulator MraZ of Burkholderia cenocepacia (strain ATCC BAA-245 / DSM 16553 / LMG 16656 / NCTC 13227 / J2315 / CF5610) (Burkholderia cepacia (strain J2315)).